We begin with the raw amino-acid sequence, 344 residues long: uncharacterized protein (344 aa).

This is an uncharacterized protein from Caenorhabditis elegans.